The chain runs to 1974 residues: Protein Ycf2 (1974 aa).

The segment at 219–246 (SQLKGSSYQSRDHLDSISNEDSEYHNQR) is disordered. An ATP-binding site is contributed by 1308-1315 (GSIGTGRS).

It belongs to the Ycf2 family.

The protein resides in the plastid. It is found in the chloroplast stroma. Probable ATPase of unknown function. Its presence in a non-photosynthetic plant (Epifagus virginiana) and experiments in tobacco indicate that it has an essential function which is probably not related to photosynthesis. This Jasminum nudiflorum (Winter jasmine) protein is Protein Ycf2.